A 26-amino-acid chain; its full sequence is Turripeptide OL57 (26 aa).

Contains 2 disulfide bonds. Expressed by the venom duct.

Its subcellular location is the secreted. Functionally, acts as a neurotoxin by inhibiting an ion channel. This Iotyrris olangoensis (Sea snail) protein is Turripeptide OL57.